Here is a 262-residue protein sequence, read N- to C-terminus: Tropinone reductase homolog At2g29310 (262 aa).

13–37 (LVTGAASGIGYAIVEELASFGAIIH) is a binding site for NADP(+). Residue S146 coordinates substrate. Y159 functions as the Proton acceptor in the catalytic mechanism.

This sequence belongs to the short-chain dehydrogenases/reductases (SDR) family. SDR65C subfamily.

In Arabidopsis thaliana (Mouse-ear cress), this protein is Tropinone reductase homolog At2g29310.